The chain runs to 426 residues: Enolase (426 aa).

A (2R)-2-phosphoglycerate-binding site is contributed by Q162. The active-site Proton donor is the E204. Mg(2+)-binding residues include D241, E286, and D313. Positions 338, 367, 368, and 389 each coordinate (2R)-2-phosphoglycerate. K338 acts as the Proton acceptor in catalysis.

This sequence belongs to the enolase family. Mg(2+) is required as a cofactor.

The protein resides in the cytoplasm. It localises to the secreted. It is found in the cell surface. The catalysed reaction is (2R)-2-phosphoglycerate = phosphoenolpyruvate + H2O. The protein operates within carbohydrate degradation; glycolysis; pyruvate from D-glyceraldehyde 3-phosphate: step 4/5. Its function is as follows. Catalyzes the reversible conversion of 2-phosphoglycerate (2-PG) into phosphoenolpyruvate (PEP). It is essential for the degradation of carbohydrates via glycolysis. This is Enolase from Aliarcobacter butzleri (strain RM4018) (Arcobacter butzleri).